A 156-amino-acid polypeptide reads, in one-letter code: Transcription elongation factor GreA (156 aa).

The stretch at 1-84 (MAKYTISKHR…IEDVLRSTDE (84 aa)) forms a coiled coil.

Belongs to the GreA/GreB family.

Functionally, necessary for efficient RNA polymerase transcription elongation past template-encoded arresting sites. The arresting sites in DNA have the property of trapping a certain fraction of elongating RNA polymerases that pass through, resulting in locked ternary complexes. Cleavage of the nascent transcript by cleavage factors such as GreA or GreB allows the resumption of elongation from the new 3'terminus. GreA releases sequences of 2 to 3 nucleotides. The protein is Transcription elongation factor GreA of Ureaplasma parvum serovar 3 (strain ATCC 27815 / 27 / NCTC 11736).